We begin with the raw amino-acid sequence, 232 residues long: Aquaporin Z 2 (232 aa).

2 consecutive transmembrane segments (helical) span residues 9 to 29 and 32 to 52; these read FLGT…ASAF and VGIG…TMAY. An NPA 1 motif is present at residues 63–65; that stretch reads NPA. A run of 3 helical transmembrane segments spans residues 82 to 102, 129 to 149, and 158 to 178; these read VSYV…LYVI, LTAA…IILG, and GFAP…SIPV. Residues 184–186 carry the NPA 2 motif; sequence NPA. The helical transmembrane segment at 200 to 220 threads the bilayer; it reads LSQLWLFWIAPLFGAAIAGIV.

The protein belongs to the MIP/aquaporin (TC 1.A.8) family. Homotetramer.

It is found in the cell inner membrane. The catalysed reaction is H2O(in) = H2O(out). Its function is as follows. Channel that permits osmotically driven movement of water in both directions. It is involved in the osmoregulation and in the maintenance of cell turgor during volume expansion in rapidly growing cells. It mediates rapid entry or exit of water in response to abrupt changes in osmolarity. The sequence is that of Aquaporin Z 2 from Rhizobium meliloti (strain 1021) (Ensifer meliloti).